Consider the following 544-residue polypeptide: Zinc finger and BTB domain-containing protein 7B (544 aa).

One can recognise a BTB domain in the interval 34-115; that stretch reads CDLTIRTQGL…AYTATLTTSS (82 aa). Residue Ser-150 is modified to Phosphoserine. Disordered stretches follow at residues 171–221 and 244–314; these read TTAS…ARAN and GRLG…EDPI. The segment covering 186-200 has biased composition (pro residues); that stretch reads PQVPLLPPPPPPPRP. Over residues 201 to 210 the composition is skewed to basic residues; sequence VARRSRKPRK. Residues Lys-210 and Lys-216 each carry the N6-acetyllysine; by EP300; alternate modification. Residues Lys-210 and Lys-216 each participate in a glycyl lysine isopeptide (Lys-Gly) (interchain with G-Cter in ubiquitin); alternate cross-link. The span at 277-286 shows a compositional bias: acidic residues; that stretch reads FEGEEEEEEM. Lys-339 carries the post-translational modification N6-acetyllysine; by EP300; alternate. Residue Lys-339 forms a Glycyl lysine isopeptide (Lys-Gly) (interchain with G-Cter in ubiquitin); alternate linkage. The segment at 348-404 is required for interaction with and acetylation by EP300; the sequence is MPQECPVCHKIIHGAGKLPRHMRTHTGEKPFACEVCGVRFTRNDKLKIHMRKHTGER. The C2H2-type 1 zinc-finger motif lies at 350-372; the sequence is QECPVCHKIIHGAGKLPRHMRTH. Thr-373 is subject to Phosphothreonine. C2H2-type zinc fingers lie at residues 378 to 400 and 406 to 428; these read FACE…MRKH and YSCP…MHLH. The C2H2-type 4; atypical zinc-finger motif lies at 434–458; it reads YECHLCHKAFAKEDHLQRHLKGQNC. Disordered regions lie at residues 465–493 and 507–544; these read RRRK…DLSN and WEQS…MESS. 2 stretches are compositionally biased toward low complexity: residues 511–522 and 531–544; these read ATTGPPVTTQGP and TPTT…MESS.

Homodimerizes. Interacts with NCL, NEDD4 and YBX1. Interacts with HNRNPU (via RNA-binding RGG-box region); the interaction facilitates the recruitment of long non-coding RNA Blnc1 by ZBTB7B. Interacts with HDAC4 and HDAC5; the interaction allows the recruitment of HDAC4 and HDAC5 on CD8 loci for deacetylation and possible inhibition of CD8 genes expression. In terms of processing, acetylated directly and specifically by EP300. EP300-mediated acetylation of Lys-210, Lys-216 and Lys-339 stabilizes the protein by antagonizing ubiquitin conjugation. Post-translationally, ubiquitinated, leading to proteasomal degradation. Competes with acetylation on Lys-210, Lys-216 and Lys-339. Widely expressed, with a higher level in skin. Expressed in thymus. Restricted to CD4 cells (mature single positive CD4(+) and intermediate CD4(+)CD8(+) cells). Expressed in the luminal epithelial cells in the mammary glands where is up-regulated at late pregnancy and lactation. Expression is enriched in brown fat.

It is found in the nucleus. Functionally, transcription regulator that acts as a key regulator of lineage commitment of immature T-cell precursors. Exerts distinct biological functions in the mammary epithelial cells and T cells in a tissue-specific manner. Necessary and sufficient for commitment of CD4 lineage, while its absence causes CD8 commitment. Development of immature T-cell precursors (thymocytes) to either the CD4 helper or CD8 killer T-cell lineages correlates precisely with their T-cell receptor specificity for major histocompatibility complex class II or class I molecules, respectively. Cross-antagonism between ZBTB7B and CBF complexes are determinative to CD4 versus CD8 cell fate decision. Suppresses RUNX3 expression and imposes CD4+ lineage fate by inducing the SOCS suppressors of cytokine signaling. induces, as a transcriptional activator, SOCS genes expression which represses RUNX3 expression and promotes the CD4+ lineage fate. During CD4 lineage commitment, associates with multiple sites at the CD8 locus, acting as a negative regulator of the CD8 promoter and enhancers by epigenetic silencing through the recruitment of class II histone deacetylases, such as HDAC4 and HDAC5, to these loci. Regulates the development of IL17-producing CD1d-restricted naural killer (NK) T cells. Also functions as an important metabolic regulator in the lactating mammary glands. Critical feed-forward regulator of insulin signaling in mammary gland lactation, directly regulates expression of insulin receptor substrate-1 (IRS-1) and insulin-induced Akt-mTOR-SREBP signaling. Transcriptional repressor of the collagen COL1A1 and COL1A2 genes. May also function as a repressor of fibronectin and possibly other extracellular matrix genes. Potent driver of brown fat development, thermogenesis and cold-induced beige fat formation. Recruits the brown fat lncRNA 1 (Blnc1):HNRNPU ribonucleoprotein complex to activate thermogenic gene expression in brown and beige adipocytes. This chain is Zinc finger and BTB domain-containing protein 7B, found in Mus musculus (Mouse).